The sequence spans 512 residues: Glutathione-binding protein GsiB (512 aa).

An N-terminal signal peptide occupies residues Met-1–Ala-26.

This sequence belongs to the bacterial solute-binding protein 5 family. As to quaternary structure, the complex is composed of two ATP-binding proteins (GsiA), two transmembrane proteins (GsiC and GsiD) and a solute-binding protein (GsiB).

It is found in the periplasm. Functionally, part of the ABC transporter complex GsiABCD involved in glutathione import. Binds glutathione. The protein is Glutathione-binding protein GsiB of Shigella dysenteriae serotype 1 (strain Sd197).